The following is an 871-amino-acid chain: Transient receptor potential cation channel subfamily V member 4 (871 aa).

2 disordered regions span residues 1-68 (MADP…PNLR) and 110-143 (YGTY…PQPP). The Cytoplasmic portion of the chain corresponds to 1–469 (MADPGDGPRA…RDKWRKFGAV (469 aa)). A Phosphotyrosine modification is found at Y110. Over residues 116–129 (HPSDNKRWRRKVVE) the composition is skewed to basic and acidic residues. ATP is bound by residues K192, K197, N201, 236-239 (YRGQ), and R248. ANK repeat units lie at residues 237-266 (RGQT…DVHA) and 284-313 (FGEL…KKAD). A 1,2-diacyl-sn-glycero-3-phospho-(1D-myo-inositol-4,5-bisphosphate) is bound at residue 249–251 (RCK). Position 253 is a phosphotyrosine (Y253). A 1,2-diacyl-sn-glycero-3-phospho-(1D-myo-inositol-4,5-bisphosphate)-binding positions include 296–299 (NQPH) and K344. The stretch at 369 to 398 (DGLSPLMMAAKTGKIGVFQHIIRREVTDED) is one ANK 3 repeat. Residues 470-490 (SFYINVVSYLCAMVIFTLTAY) form a helical membrane-spanning segment. Residues 491 to 507 (YQPLEGTPPYPYRTTVD) lie on the Extracellular side of the membrane. A helical membrane pass occupies residues 508 to 534 (YLRLAGEVITLLTGVLFFFTSIKDLFM). At 535 to 547 (KKCPGVNSLFVDG) the chain is on the cytoplasmic side. Residues 548 to 568 (SFQLLYFIYSVLVVVSAALYL) form a helical membrane-spanning segment. Over 569-572 (AGIE) the chain is Extracellular. The helical transmembrane segment at 573-593 (AYLAVMVFALVLGWMNALYFT) threads the bilayer. Topologically, residues 594–608 (RGLKLTGTYSIMIQK) are cytoplasmic. A helical membrane pass occupies residues 609–636 (ILFKDLFRFLLVYLLFMIGYASALVTLL). At 637-665 (NPCTNMKVCNEDQSNCTVPSYPACRDSET) the chain is on the extracellular side. An intramembrane region (pore-forming) is located at residues 666 to 685 (FSAFLLDLFKLTIGMGDLEM). The Selectivity filter signature appears at 679–682 (GMGD). Residue D682 coordinates Ca(2+). Topologically, residues 686 to 693 (LSSAKYPV) are extracellular. Residues 694 to 722 (VFILLLVTYIILTFVLLLNMLIALMGETV) form a helical membrane-spanning segment. The Cytoplasmic segment spans residues 723–871 (GQVSKESKHI…PKWRAEDAPL (149 aa)). Position 805 is a phosphotyrosine (Y805). The interval 812–831 (HTMGRLRRDRWSSVVPRVVE) is interaction with calmodulin and ITPR3. Residue S824 is modified to Phosphoserine.

The protein belongs to the transient receptor (TC 1.A.4) family. TrpV subfamily. TRPV4 sub-subfamily. In terms of assembly, homotetramer. Interacts with calmodulin. Interacts with MAP7 and Src family Tyr protein kinases LYN, SRC, FYN, HCK, LCK and YES. Interacts with CTNNB1. The TRPV4 and CTNNB1 complex can interact with CDH1. Part of a complex containing MLC1, AQP4, HEPACAM and ATP1B1. Interacts with PACSIN1, PACSIN2 and PACSIN3 (via SH3 domain). Interacts with ITPR3. Interacts with AQP5; the interaction is probably indirect and regulates TRPV4 activation by hypotonicity. Interacts with ANO1. Interacts (via C-terminus) with PKD2 (via C-terminus). Interacts with DDX3X; this interaction is decreased when the channel is activated. Post-translationally, N-glycosylated. As to expression, expressed lung, spleen, kidney, testis, fat, and at very low levels in trigeminal ganglia.

It is found in the cell membrane. The protein resides in the apical cell membrane. It localises to the cell junction. The protein localises to the adherens junction. Its subcellular location is the cell projection. It is found in the cilium. The catalysed reaction is Ca(2+)(in) = Ca(2+)(out). Functionally, non-selective calcium permeant cation channel involved in osmotic sensitivity and mechanosensitivity. Activation by exposure to hypotonicity within the physiological range exhibits an outward rectification. Also activated by heat, low pH, citrate and phorbol esters. Increase of intracellular Ca(2+) potentiates currents. Channel activity seems to be regulated by a calmodulin-dependent mechanism with a negative feedback mechanism. Acts as a regulator of intracellular Ca(2+) in synoviocytes. Plays an obligatory role as a molecular component in the nonselective cation channel activation induced by 4-alpha-phorbol 12,13-didecanoate and hypotonic stimulation in synoviocytes and also regulates production of IL-8. Together with PKD2, forms mechano- and thermosensitive channels in cilium. Promotes cell-cell junction formation in skin keratinocytes and plays an important role in the formation and/or maintenance of functional intercellular barriers. Negatively regulates expression of PPARGC1A, UCP1, oxidative metabolism and respiration in adipocytes. Regulates expression of chemokines and cytokines related to pro-inflammatory pathway in adipocytes. Together with AQP5, controls regulatory volume decrease in salivary epithelial cells. Required for normal development and maintenance of bone and cartilage. In its inactive state, may sequester DDX3X at the plasma membrane. When activated, the interaction between both proteins is affected and DDX3X relocalizes to the nucleus. In neurons of the central nervous system, could play a role in triggering voluntary water intake in response to increased sodium concentration in body fluid. This Rattus norvegicus (Rat) protein is Transient receptor potential cation channel subfamily V member 4 (Trpv4).